A 267-amino-acid polypeptide reads, in one-letter code: Cyclin-C (267 aa).

The Cyclin N-terminal domain maps to 48–151 (IQVLGEQLKL…LLENLDCCLI (104 aa)).

The protein belongs to the cyclin family. Cyclin C subfamily. As to quaternary structure, component of the Cdk8 module of the Mediator complex, composed of CycC, Cdk8, kto and skd.

It is found in the nucleus. Component of the Mediator complex, a coactivator involved in regulated gene transcription of nearly all RNA polymerase II-dependent genes. Mediator functions as a bridge to convey information from gene-specific regulatory proteins to the basal RNA polymerase II transcription machinery. Mediator is recruited to promoters by direct interactions with regulatory proteins and serves as a scaffold for the assembly of a functional preinitiation complex with RNA polymerase II and the general transcription factors. Binds to and activates cyclin-dependent kinase Cdk8 that phosphorylates the CTD (C-terminal domain) of the large subunit of RNA polymerase II (RNAp II), which may inhibit the formation of a transcription initiation complex. Required for leg and eye development and macrochaete specification or differentiation. This chain is Cyclin-C (CycC), found in Drosophila melanogaster (Fruit fly).